A 228-amino-acid chain; its full sequence is ATP synthase subunit beta, mitochondrial (228 aa).

The transit peptide at 1–31 directs the protein to the mitochondrion; that stretch reads MFALRAAAKADKNLLPFLGQLSRSHAAKAAK. 183–190 is an ATP binding site; the sequence is GGAGVGKT.

It belongs to the ATPase alpha/beta chains family. F-type ATPases have 2 components, CF(1) - the catalytic core - and CF(0) - the membrane proton channel. CF(1) has five subunits: alpha(3), beta(3), gamma(1), delta(1), epsilon(1). CF(0) has three main subunits: a, b and c.

Its subcellular location is the mitochondrion. It localises to the mitochondrion inner membrane. It carries out the reaction ATP + H2O + 4 H(+)(in) = ADP + phosphate + 5 H(+)(out). Its function is as follows. Mitochondrial membrane ATP synthase (F(1)F(0) ATP synthase or Complex V) produces ATP from ADP in the presence of a proton gradient across the membrane which is generated by electron transport complexes of the respiratory chain. F-type ATPases consist of two structural domains, F(1) - containing the extramembraneous catalytic core, and F(0) - containing the membrane proton channel, linked together by a central stalk and a peripheral stalk. During catalysis, ATP synthesis in the catalytic domain of F(1) is coupled via a rotary mechanism of the central stalk subunits to proton translocation. Subunits alpha and beta form the catalytic core in F(1). Rotation of the central stalk against the surrounding alpha(3)beta(3) subunits leads to hydrolysis of ATP in three separate catalytic sites on the beta subunits. The protein is ATP synthase subunit beta, mitochondrial of Drosophila virilis (Fruit fly).